Consider the following 383-residue polypeptide: Chorismate synthase (383 aa).

The NADP(+) site is built by Arg-39 and Arg-45. FMN contacts are provided by residues 128–130 (RAS), Gly-291, 306–310 (KPIAT), and Arg-332.

It belongs to the chorismate synthase family. Homotetramer. It depends on FMNH2 as a cofactor.

The catalysed reaction is 5-O-(1-carboxyvinyl)-3-phosphoshikimate = chorismate + phosphate. Its pathway is metabolic intermediate biosynthesis; chorismate biosynthesis; chorismate from D-erythrose 4-phosphate and phosphoenolpyruvate: step 7/7. Functionally, catalyzes the anti-1,4-elimination of the C-3 phosphate and the C-6 proR hydrogen from 5-enolpyruvylshikimate-3-phosphate (EPSP) to yield chorismate, which is the branch point compound that serves as the starting substrate for the three terminal pathways of aromatic amino acid biosynthesis. This reaction introduces a second double bond into the aromatic ring system. This Thermus thermophilus (strain ATCC 27634 / DSM 579 / HB8) protein is Chorismate synthase.